Here is a 564-residue protein sequence, read N- to C-terminus: MFS-type transporter astH (564 aa).

N23 carries N-linked (GlcNAc...) asparagine glycosylation. Residues 26-59 form a disordered region; the sequence is KDTLVNCSPDPENPEKGQASSPRTQISVDDNEES. Positions 43–53 are enriched in polar residues; the sequence is QASSPRTQISV. 4 helical membrane-spanning segments follow: residues 69–89, 106–126, 143–163, and 197–217; these read LAMIMISLCLAVFCLALDTTI, DVGWYGSAYLLTTSALTLSFG, GMFEIGSLICGATPNSLGLII, and GILGGLFGVASVVGPLIGGAF. Residue N220 is glycosylated (N-linked (GlcNAc...) asparagine). The next 6 helical transmembrane spans lie at 225–245, 266–286, 297–317, 339–359, 375–395, and 396–416; these read WCFYINLPLGAVTGLFLILFF, LLGSLCFLPAIICVLLALQWG, IIALFTVFGVLLLAFAGVQWW, LFSFCLNASFIIFTYYLPMWF, LPMVLAVVIFSIISGGLVGAL, and GYYTPFMVIAPLIAAIGAGLL. N-linked (GlcNAc...) asparagine glycosylation is present at N425. A run of 2 helical transmembrane segments spans residues 461-481 and 537-557; these read TGTVIVMFMQTIGGAIFMSVG and FYVAVAMAVLALPGALVMQWI.

This sequence belongs to the major facilitator superfamily. TCR/Tet family.

It is found in the membrane. MFS-type transporter; part of the gene cluster that mediates the biosynthesis of astellolides, drimane-type sesquiterpene esters that show antimicrobial, anti-inflammatory, and anti-tumor activities. Seems not to be involved in astellolides translocation. The sequence is that of MFS-type transporter astH from Aspergillus oryzae (strain ATCC 42149 / RIB 40) (Yellow koji mold).